Reading from the N-terminus, the 184-residue chain is CASP-like protein 1U2 (184 aa).

At 1-16 the chain is on the cytoplasmic side; it reads MSYGCQVSDDEPNGSK. Residues 17-37 form a helical membrane-spanning segment; that stretch reads AVSLLLRLSTLALALTSAVVM. Over 38 to 62 the chain is Extracellular; sequence ATASECTVVQLNGVVATITYKDFPP. A helical membrane pass occupies residues 63 to 83; sequence FVYLVGFNIAAAMLEAAAIYL. Over 84 to 100 the chain is Cytoplasmic; sequence RLSTGGGDDDDEGFKGK. The helical transmembrane segment at 101-121 threads the bilayer; the sequence is LPGILLVVIDVAVQALVYTAT. Over 122–153 the chain is Extracellular; sequence GGAFAAVSAYGPQINACGAGAGRFCGQVHQSK. A helical transmembrane segment spans residues 154–174; sequence LLSFAGSAAVGLAVVFRDVSL. Residues 175–184 are Cytoplasmic-facing; that stretch reads PFSLWPTSSD.

It belongs to the Casparian strip membrane proteins (CASP) family. As to quaternary structure, homodimer and heterodimers.

It is found in the cell membrane. The chain is CASP-like protein 1U2 from Oryza sativa subsp. japonica (Rice).